The sequence spans 99 residues: Integration host factor subunit alpha (99 aa).

Residues 49–71 (FGNFDLRDKNQRPGRNPKTGEDI) form a disordered region.

This sequence belongs to the bacterial histone-like protein family. In terms of assembly, heterodimer of an alpha and a beta chain.

This protein is one of the two subunits of integration host factor, a specific DNA-binding protein that functions in genetic recombination as well as in transcriptional and translational control. The polypeptide is Integration host factor subunit alpha (Shewanella frigidimarina (strain NCIMB 400)).